A 314-amino-acid polypeptide reads, in one-letter code: tRNA dimethylallyltransferase (314 aa).

Residue 10–17 (GPTGVGKT) participates in ATP binding. 12 to 17 (TGVGKT) serves as a coordination point for substrate. The interval 35 to 38 (DSMQ) is interaction with substrate tRNA.

The protein belongs to the IPP transferase family. Monomer. It depends on Mg(2+) as a cofactor.

It carries out the reaction adenosine(37) in tRNA + dimethylallyl diphosphate = N(6)-dimethylallyladenosine(37) in tRNA + diphosphate. Functionally, catalyzes the transfer of a dimethylallyl group onto the adenine at position 37 in tRNAs that read codons beginning with uridine, leading to the formation of N6-(dimethylallyl)adenosine (i(6)A). The chain is tRNA dimethylallyltransferase from Finegoldia magna (strain ATCC 29328 / DSM 20472 / WAL 2508) (Peptostreptococcus magnus).